A 156-amino-acid chain; its full sequence is Ribosome maturation factor RimP (156 aa).

The protein belongs to the RimP family.

Its subcellular location is the cytoplasm. Its function is as follows. Required for maturation of 30S ribosomal subunits. This is Ribosome maturation factor RimP from Dictyoglomus turgidum (strain DSM 6724 / Z-1310).